Reading from the N-terminus, the 313-residue chain is Serine/threonine-protein phosphatase PP2A-3 catalytic subunit (313 aa).

Residues D61, H63, D89, and N121 each coordinate Mn(2+). H122 serves as the catalytic Proton donor. 2 residues coordinate Mn(2+): H171 and H245. Residue L313 is modified to Leucine methyl ester.

The protein belongs to the PPP phosphatase family. PP-2A subfamily. PP2A consists of a common heterodimeric core enzyme, composed of a 36 kDa catalytic subunit (subunit C) and a 65 kDa constant regulatory subunit (subunit A), that associates with a variety of regulatory subunits such as subunits B (the R2/B/PR55/B55, R3/B''/PR72/PR130/PR59 and R5/B'/B56 families). Interacts with ACR4. Interacts with TAP46. Interacts with SIC/RON3. The cofactor is Mn(2+). Post-translationally, reversibly methyl esterified on Leu-313 by leucine carboxyl methyltransferase 1 (LCMT1) and pectin methylesterase 1 (PME1). Carboxyl methylation influences the affinity of the catalytic subunit for the different regulatory subunits, thereby modulating the PP2A holoenzyme's substrate specificity, enzyme activity and cellular localization. In terms of processing, phosphorylation of either threonine (by autophosphorylation-activated protein kinase) or tyrosine results in inactivation of the phosphatase. Auto-dephosphorylation has been suggested as a mechanism for reactivation.

The protein resides in the cytoplasm. The enzyme catalyses O-phospho-L-seryl-[protein] + H2O = L-seryl-[protein] + phosphate. It carries out the reaction O-phospho-L-threonyl-[protein] + H2O = L-threonyl-[protein] + phosphate. In terms of biological role, functions redundantly with PP2A4, and is involved in establishing auxin gradients, apical-basal axis of polarity and root and shoot apical meristem during embryogenesis. May dephosphorylate PIN1 and regulate its subcellular distribution for polar auxin transport. Involved in the regulation of formative cell division in roots by dephosphorylating ACR4 protein kinase. The protein is Serine/threonine-protein phosphatase PP2A-3 catalytic subunit of Arabidopsis thaliana (Mouse-ear cress).